The chain runs to 663 residues: Protein associated with UVRAG as autophagy enhancer (663 aa).

Disordered regions lie at residues 1 to 36 and 65 to 136; these read MVSQSSGRQDSPVDPWEGVSDDPGNTDGLPSLLDTE and DASP…EERA. 2 stretches are compositionally biased toward polar residues: residues 80 to 93 and 105 to 130; these read TASNTKSPLGTSPL and PKGTTDSLGSSSAWGTAGNGSDSSVT. Residues 196–235 are interaction with UVRAG; that stretch reads EAFVLPVDAEKENAHFYVADMIISVMEKMKCNILSQQHTE. N6-acetyllysine occurs at positions 484, 534, 574, and 634.

As to quaternary structure, interacts with UVRAG; the interaction is direct and promotes association with the PI3K/PI3KC3 and HOPS complexes. Interacts with STX17. Post-translationally, acetylated by KAT5/TIP60 under autophagy induction, promoting autophagosome maturation and lipid metabolism. Lys-484 and Lys-574 constitute the key sites for tuning function in autophagy.

It is found in the cytoplasmic vesicle. Its subcellular location is the autophagosome membrane. Regulator of autophagy that promotes autophagosome maturation by facilitating the biogenesis of phosphatidylinositol 3-phosphate (PtdIns(3)P) in late steps of autophagy. Acts by antagonizing RUBCN, thereby stimulating phosphatidylinositol 3-kinase activity of the PI3K/PI3KC3 complex. Following anchorage to the autophagosomal SNARE STX17, promotes the recruitment of PI3K/PI3KC3 and HOPS complexes to the autophagosome to regulate the fusion specificity of autophagosomes with late endosomes/lysosomes. Binds phosphoinositides phosphatidylinositol 3-phosphate (PtdIns(3)P), 4-phosphate (PtdIns(4)P) and 5-phosphate (PtdIns(5)P). In addition to its role in autophagy, acts as a regulator of lipid and glycogen homeostasis. May act as a tumor suppressor. The chain is Protein associated with UVRAG as autophagy enhancer from Bos taurus (Bovine).